Reading from the N-terminus, the 394-residue chain is F-box/kelch-repeat protein At1g23390 (394 aa).

An F-box domain is found at 15–62; that stretch reads EEESSIDGDILESILSYLPLLDLDSACQVSKSWNRAVFYSLRRLKTMP. 4 Kelch repeats span residues 65–111, 155–204, 206–252, and 321–369; these read FVYN…RSSH, SLII…TWLS, AVSS…SIGF, and MVYV…VIVA.

The sequence is that of F-box/kelch-repeat protein At1g23390 from Arabidopsis thaliana (Mouse-ear cress).